We begin with the raw amino-acid sequence, 68 residues long: Large ribosomal subunit protein bL31 (68 aa).

The Zn(2+) site is built by cysteine 16, cysteine 18, cysteine 37, and cysteine 40.

The protein belongs to the bacterial ribosomal protein bL31 family. Type A subfamily. In terms of assembly, part of the 50S ribosomal subunit. The cofactor is Zn(2+).

Its function is as follows. Binds the 23S rRNA. This Aquifex aeolicus (strain VF5) protein is Large ribosomal subunit protein bL31.